The sequence spans 289 residues: Cbb3-type cytochrome c oxidase subunit FixP (289 aa).

The Cytoplasmic portion of the chain corresponds to 1–33; the sequence is MADKHKHVDEVSGVETTGHEWDGIRELNNPMPR. Residues 34–56 form a helical membrane-spanning segment; sequence WWVYSFYATIIWAIGYAIAYPSW. Residues 57–289 lie on the Periplasmic side of the membrane; that stretch reads PMLTEATKGM…VFVHSLGGGE (233 aa). Cytochrome c domains are found at residues 110–198 and 205–286; these read FAVS…VSLT and HLVQ…HSLG. Heme c is bound by residues C123, C126, H127, M175, C218, C221, H222, and M263.

The protein belongs to the CcoP / FixP family. As to quaternary structure, component of the cbb3-type cytochrome c oxidase at least composed of FixN, FixO, FixQ and FixP. Heme c is required as a cofactor.

It localises to the cell inner membrane. It functions in the pathway energy metabolism; oxidative phosphorylation. Its function is as follows. C-type cytochrome. Part of the cbb3-type cytochrome c oxidase complex. FixP subunit is required for transferring electrons from donor cytochrome c via its heme groups to FixO subunit. From there, electrons are shuttled to the catalytic binuclear center of FixN subunit where oxygen reduction takes place. The complex also functions as a proton pump. This Rhizobium meliloti (strain 1021) (Ensifer meliloti) protein is Cbb3-type cytochrome c oxidase subunit FixP.